Reading from the N-terminus, the 1341-residue chain is DNA-directed RNA polymerase subunit beta (1341 aa).

The protein belongs to the RNA polymerase beta chain family. The RNAP catalytic core consists of 2 alpha, 1 beta, 1 beta' and 1 omega subunit. When a sigma factor is associated with the core the holoenzyme is formed, which can initiate transcription.

The enzyme catalyses RNA(n) + a ribonucleoside 5'-triphosphate = RNA(n+1) + diphosphate. Functionally, DNA-dependent RNA polymerase catalyzes the transcription of DNA into RNA using the four ribonucleoside triphosphates as substrates. The sequence is that of DNA-directed RNA polymerase subunit beta from Pseudoalteromonas translucida (strain TAC 125).